The sequence spans 558 residues: MHFDYIIIGAGSAGNVLATRLTEDSDTTVLLLEAGGPDYRADFRTQMPAALAFPLQGKRYNWAYETEPEPHMNYRRMECGRGKGLGGSSLINGMCYIRGNAMDLDNWAQEPGLEHWSYLNCLPYYRKAETRDIGPNDYHGGDGPVSVATPKHNNNPLFHAMIEAGVQAGYPRTDDLNGYQQEGFGPMDRTVTPQGRRASTARGYLDQAKGRPNLTIITHALTDHILFEGKKASGVEWLEGDSTIPTRAMARKEVLLCAGAIASPQILQRSGVGDASLLKAFDIPLVHHLPGVGENLQDHLEMYLQYECKEPVSLYPALQWWNQPKIGAEWLFGGTGVGASNHFEAGGFIRSSEAFSWPNIQYHFLPVAINYNGSNAVKEHGFQCHVGSMRSPSRGHVHIKSRDPREHPAILFNYMSTGQDWQEFRDAIRITREIINQPALDKYRGREISPGITCQTDEQLDAFVRDHAETAFHPCGTCKMGYDEMAVVDGEGRVHGVENLRVVDASIMPQIITGNLNATTIMIGEKMADAIRGREPLAKSTASYYVAGDAPVRQPPLR.

FAD is bound at residue 4 to 33; sequence DYIIIGAGSAGNVLATRLTEDSDTTVLLLE. H473 functions as the Proton acceptor in the catalytic mechanism.

This sequence belongs to the GMC oxidoreductase family. It depends on FAD as a cofactor.

The enzyme catalyses choline + A = betaine aldehyde + AH2. The catalysed reaction is betaine aldehyde + NAD(+) + H2O = glycine betaine + NADH + 2 H(+). It participates in amine and polyamine biosynthesis; betaine biosynthesis via choline pathway; betaine aldehyde from choline (cytochrome c reductase route): step 1/1. In terms of biological role, involved in the biosynthesis of the osmoprotectant glycine betaine. Catalyzes the oxidation of choline to betaine aldehyde and betaine aldehyde to glycine betaine at the same rate. In Citrobacter koseri (strain ATCC BAA-895 / CDC 4225-83 / SGSC4696), this protein is Oxygen-dependent choline dehydrogenase.